We begin with the raw amino-acid sequence, 232 residues long: Small ribosomal subunit protein uS3 (232 aa).

One can recognise a KH type-2 domain in the interval 39–107 (VRQYLTKELK…PAQINIAEVR (69 aa)).

Belongs to the universal ribosomal protein uS3 family. In terms of assembly, part of the 30S ribosomal subunit. Forms a tight complex with proteins S10 and S14.

Its function is as follows. Binds the lower part of the 30S subunit head. Binds mRNA in the 70S ribosome, positioning it for translation. The sequence is that of Small ribosomal subunit protein uS3 from Aliivibrio fischeri (strain MJ11) (Vibrio fischeri).